A 362-amino-acid polypeptide reads, in one-letter code: sn-glycerol-3-phosphate import ATP-binding protein UgpC (362 aa).

Residues 4-235 (LSFRNVKKTY…PASTFVAGFI (232 aa)) form the ABC transporter domain. ATP is bound at residue 37-44 (GPSGCGKS).

Belongs to the ABC transporter superfamily. sn-glycerol-3-phosphate importer (TC 3.A.1.1.3) family. In terms of assembly, the complex is composed of two ATP-binding proteins (UgpC), two transmembrane proteins (UgpA and UgpE) and a solute-binding protein (UgpB).

The protein resides in the cell inner membrane. It catalyses the reaction sn-glycerol 3-phosphate(out) + ATP + H2O = sn-glycerol 3-phosphate(in) + ADP + phosphate + H(+). Functionally, part of the ABC transporter complex UgpBAEC involved in sn-glycerol-3-phosphate (G3P) import. Responsible for energy coupling to the transport system. In Bordetella bronchiseptica (strain ATCC BAA-588 / NCTC 13252 / RB50) (Alcaligenes bronchisepticus), this protein is sn-glycerol-3-phosphate import ATP-binding protein UgpC.